We begin with the raw amino-acid sequence, 327 residues long: Malate dehydrogenase (327 aa).

11 to 17 contributes to the NAD(+) binding site; that stretch reads GAAGQIS. Substrate contacts are provided by Arg-92 and Arg-98. Residues Asn-105, Gln-112, and 129 to 131 contribute to the NAD(+) site; that span reads VGN. Asn-131 and Arg-162 together coordinate substrate. His-187 functions as the Proton acceptor in the catalytic mechanism.

This sequence belongs to the LDH/MDH superfamily. MDH type 2 family.

It catalyses the reaction (S)-malate + NAD(+) = oxaloacetate + NADH + H(+). Functionally, catalyzes the reversible oxidation of malate to oxaloacetate. The chain is Malate dehydrogenase from Cellvibrio japonicus (strain Ueda107) (Pseudomonas fluorescens subsp. cellulosa).